Here is a 417-residue protein sequence, read N- to C-terminus: UDP-N-acetylglucosamine 1-carboxyvinyltransferase (417 aa).

22-23 (KN) is a binding site for phosphoenolpyruvate. Arginine 93 provides a ligand contact to UDP-N-acetyl-alpha-D-glucosamine. Catalysis depends on cysteine 117, which acts as the Proton donor. The residue at position 117 (cysteine 117) is a 2-(S-cysteinyl)pyruvic acid O-phosphothioketal. UDP-N-acetyl-alpha-D-glucosamine is bound by residues 122–126 (RPVDQ), aspartate 304, and isoleucine 326.

This sequence belongs to the EPSP synthase family. MurA subfamily.

The protein localises to the cytoplasm. It catalyses the reaction phosphoenolpyruvate + UDP-N-acetyl-alpha-D-glucosamine = UDP-N-acetyl-3-O-(1-carboxyvinyl)-alpha-D-glucosamine + phosphate. Its pathway is cell wall biogenesis; peptidoglycan biosynthesis. Its function is as follows. Cell wall formation. Adds enolpyruvyl to UDP-N-acetylglucosamine. The polypeptide is UDP-N-acetylglucosamine 1-carboxyvinyltransferase (Neisseria meningitidis serogroup B (strain ATCC BAA-335 / MC58)).